The primary structure comprises 406 residues: RILP-like protein 1 (406 aa).

The 95-residue stretch at 5-99 (QLGAALDKSA…LEKEKKHKKE (95 aa)) folds into the RH1 domain. Positions 105-319 (DVWRGEAQDL…KVFMLQEEIA (215 aa)) form a coiled coil. Disordered regions lie at residues 234–272 (EVSS…PAQE) and 323–351 (SEEQ…NFQP). Over residues 241-257 (EVSRLKEKLKEQSRSNE) the composition is skewed to basic and acidic residues. The 70-residue stretch at 289 to 358 (RPRFTLQELR…FQPESGIKRL (70 aa)) folds into the RH2 domain. Over residues 340-351 (TLRTNPRSNFQP) the composition is skewed to polar residues.

It belongs to the RILPL family.

The protein localises to the cytoplasm. Its subcellular location is the cytosol. It is found in the cytoskeleton. The protein resides in the microtubule organizing center. It localises to the centrosome. The protein localises to the cell projection. Its subcellular location is the cilium. Its function is as follows. Plays a role in the regulation of cell shape and polarity. Plays a role in cellular protein transport, including protein transport away from primary cilia. Neuroprotective protein. This Danio rerio (Zebrafish) protein is RILP-like protein 1 (rilpl1).